We begin with the raw amino-acid sequence, 127 residues long: Anti-adapter protein IraD (127 aa).

This sequence belongs to the GpW/Gp25 family. IraD subfamily. Interacts with RssB.

It localises to the cytoplasm. Its function is as follows. Inhibits RpoS proteolysis by regulating RssB activity, thereby increasing the stability of the sigma stress factor RpoS during oxidative stress. Its effect on RpoS stability is due to its interaction with RssB, which probably blocks the interaction of RssB with RpoS, and the consequent delivery of the RssB-RpoS complex to the ClpXP protein degradation pathway. The sequence is that of Anti-adapter protein IraD from Escherichia coli (strain SMS-3-5 / SECEC).